Consider the following 87-residue polypeptide: U3-theraphotoxin-Hhn1l (87 aa).

The N-terminal stretch at 1-24 (MVNMKASMFLTFAGLVLLFVVCYA) is a signal peptide. Residues 25-52 (SESEEKEFPKEMLSSIFAVDNDFKQEER) constitute a propeptide that is removed on maturation. 3 disulfides stabilise this stretch: cysteine 54-cysteine 67, cysteine 61-cysteine 72, and cysteine 66-cysteine 79.

This sequence belongs to the neurotoxin 10 (Hwtx-1) family. 51 (Hntx-8) subfamily. Hntx-8 sub-subfamily. Expressed by the venom gland.

The protein localises to the secreted. Ion channel inhibitor. This is U3-theraphotoxin-Hhn1l from Cyriopagopus hainanus (Chinese bird spider).